The following is a 726-amino-acid chain: Catalase-peroxidase (726 aa).

Positions 98-226 (WHSAGTYRMQ…LAAVHMGLIY (129 aa)) form a cross-link, tryptophyl-tyrosyl-methioninium (Trp-Tyr) (with M-252). His99 (proton acceptor) is an active-site residue. The tryptophyl-tyrosyl-methioninium (Tyr-Met) (with W-98) cross-link spans 226-252 (YVNPEGVNGQPDPARTAQHVRETFARM). Heme b is bound at residue His267.

This sequence belongs to the peroxidase family. Peroxidase/catalase subfamily. In terms of assembly, homodimer or homotetramer. Requires heme b as cofactor. In terms of processing, formation of the three residue Trp-Tyr-Met cross-link is important for the catalase, but not the peroxidase activity of the enzyme.

The enzyme catalyses H2O2 + AH2 = A + 2 H2O. It carries out the reaction 2 H2O2 = O2 + 2 H2O. Bifunctional enzyme with both catalase and broad-spectrum peroxidase activity. This chain is Catalase-peroxidase, found in Roseobacter denitrificans (strain ATCC 33942 / OCh 114) (Erythrobacter sp. (strain OCh 114)).